A 286-amino-acid polypeptide reads, in one-letter code: Pantothenate synthetase (286 aa).

30–37 (MGNLHDGH) provides a ligand contact to ATP. Residue His-37 is the Proton donor of the active site. Gln-61 contacts (R)-pantoate. Gln-61 is a beta-alanine binding site. 148–151 (GKKD) provides a ligand contact to ATP. Position 154 (Gln-154) interacts with (R)-pantoate. ATP contacts are provided by residues Val-177 and 185–188 (LSSR).

This sequence belongs to the pantothenate synthetase family. Homodimer.

The protein resides in the cytoplasm. It catalyses the reaction (R)-pantoate + beta-alanine + ATP = (R)-pantothenate + AMP + diphosphate + H(+). It participates in cofactor biosynthesis; (R)-pantothenate biosynthesis; (R)-pantothenate from (R)-pantoate and beta-alanine: step 1/1. Its function is as follows. Catalyzes the condensation of pantoate with beta-alanine in an ATP-dependent reaction via a pantoyl-adenylate intermediate. This is Pantothenate synthetase from Psychrobacter sp. (strain PRwf-1).